A 512-amino-acid polypeptide reads, in one-letter code: Cytochrome P450 76C2 (512 aa).

Residues 3 to 23 traverse the membrane as a helical segment; it reads IIFEQALFPLFCFVLSFFIIF. Heme is bound at residue cysteine 451.

This sequence belongs to the cytochrome P450 family. Requires heme as cofactor.

The protein resides in the membrane. The polypeptide is Cytochrome P450 76C2 (CYP76C2) (Arabidopsis thaliana (Mouse-ear cress)).